We begin with the raw amino-acid sequence, 890 residues long: Pentatricopeptide repeat-containing protein At3g57430, chloroplastic (890 aa).

The transit peptide at 1–44 directs the protein to the chloroplast; it reads MSCPLAFTFSLPSIFPFPSQLLPFSRHKHPYLLRATPTSATEDV. 18 PPR repeats span residues 61 to 95, 96 to 130, 132 to 162, 163 to 197, 198 to 231, 235 to 265, 266 to 300, 301 to 335, 337 to 371, 372 to 398, 404 to 438, 439 to 473, 474 to 504, 516 to 550, 551 to 581, 582 to 616, 617 to 652, and 653 to 683; these read SPEWWIDLLRSKVRSNLLREAVLTYVDMIVLGIKP, DNYAFPALLKAVADLQDMELGKQIHAHVYKFGYGV, SVTVANTLVNLYRKCGDFGAVYKVFDRISER, NQVSWNSLISSLCSFEKWEMALEAFRCMLDENVEP, SSFTLVSVVTACSNLPMPEGLMMGKQVHAYGLRK, NSFIINTLVAMYGKLGKLASSKVLLGSFGGR, DLVTWNTVLSSLCQNEQLLEALEYLREMVLEGVEP, DEFTISSVLPACSHLEMLRTGKELHAYALKNGSLD, NSFVGSALVDMYCNCKQVLSGRRVFDGMFDRKIGL, WNAMIAGYSQNEHDKEALLLFIGMEES, NSTTMAGVVPACVRSGAFSRKEAIHGFVVKRGLDR, DRFVQNTLMDMYSRLGKIDIAMRIFGKMEDRDLVT, WNTMITGYVFSEHHEDALLLLHKMQNLERKV, NSITLMTILPSCAALSALAKGKEIHAYAIKNNLAT, DVAVGSALVDMYAKCGCLQMSRKVFDQIPQK, NVITWNVIIMAYGMHGNGQEAIDLLRMMMVQGVKP, NEVTFISVFAACSHSGMVDEGLRIFYVMKPDYGVEP, and SSDHYACVVDLLGRAGRIKEAYQLMNMMPRD. A type E motif region spans residues 689–764; it reads AWSSLLGASR…EPGCSWIEHG (76 aa). The segment at 765–795 is type E(+) motif; that stretch reads DEVHKFVAGDSSHPQSEKLSGYLETLWERMR. Residues 796-890 form a type DYW motif region; sequence KEGYVPDTSC…NGTCSCGDYW (95 aa).

It belongs to the PPR family. PCMP-H subfamily.

The protein localises to the plastid. Its subcellular location is the chloroplast. Functionally, involved in RNA editing events in chloroplasts. Required for the editing of a single site in ndhB and ndhF transcripts, which are two plastid-encoded subunits of the chloroplast NAD(P)H dehydrogenase (NDH) complex. Required for the editing of a single site in psbZ. Required for optimal activity of the NDH complex of the photosynthetic electron transport chain. The chain is Pentatricopeptide repeat-containing protein At3g57430, chloroplastic (PCMP-H81) from Arabidopsis thaliana (Mouse-ear cress).